The chain runs to 548 residues: Glucan endo-1,3-beta-glucosidase (548 aa).

The tat-type signal signal peptide spans 1–36 (MPHDRKNSSRRAWAALCAAVLAVSGALVGVAAPASA). Residues 38–396 (PATIPLTITN…PQAAYIKLDP (359 aa)) enclose the GH64 domain. Glutamate 153 functions as the Proton donor in the catalytic mechanism. Aspartate 169 acts as the Proton acceptor in catalysis. Residues 422–548 (GTGALRIGST…NQTEAQRWTL (127 aa)) enclose the Ricin B-type lectin domain.

This sequence belongs to the glycosyl hydrolase 64 family. Predicted to be exported by the Tat system. The position of the signal peptide cleavage has not been experimentally proven.

The protein resides in the periplasm. The catalysed reaction is Hydrolysis of (1-&gt;3)-beta-D-glucosidic linkages in (1-&gt;3)-beta-D-glucans.. In terms of biological role, lysis of cellular walls containing beta-1,3-glucans. Implicated in the defense against fungal pathogens. This chain is Glucan endo-1,3-beta-glucosidase (glcI), found in Arthrobacter sp. (strain YCWD3).